Consider the following 227-residue polypeptide: Cytochrome c oxidase subunit 2 (227 aa).

Over 1-14 the chain is Mitochondrial intermembrane; the sequence is MAHPVQLGLQDATS. A helical membrane pass occupies residues 15–45; it reads PVMEELITFHDHALMAMSLISLLVLYALFST. Over 46-59 the chain is Mitochondrial matrix; that stretch reads LTTKLTNTNITDAQ. Residues 60–87 form a helical membrane-spanning segment; the sequence is EMEIIWTILPAIILVLIALPSLRILYLT. Residues 88 to 227 lie on the Mitochondrial intermembrane side of the membrane; it reads DEVNNPSFTI…IFEMGPVFTL (140 aa). Cu cation-binding residues include His-161, Cys-196, Glu-198, Cys-200, His-204, and Met-207. Glu-198 is a Mg(2+) binding site.

It belongs to the cytochrome c oxidase subunit 2 family. In terms of assembly, component of the cytochrome c oxidase (complex IV, CIV), a multisubunit enzyme composed of 14 subunits. The complex is composed of a catalytic core of 3 subunits MT-CO1, MT-CO2 and MT-CO3, encoded in the mitochondrial DNA, and 11 supernumerary subunits COX4I, COX5A, COX5B, COX6A, COX6B, COX6C, COX7A, COX7B, COX7C, COX8 and NDUFA4, which are encoded in the nuclear genome. The complex exists as a monomer or a dimer and forms supercomplexes (SCs) in the inner mitochondrial membrane with NADH-ubiquinone oxidoreductase (complex I, CI) and ubiquinol-cytochrome c oxidoreductase (cytochrome b-c1 complex, complex III, CIII), resulting in different assemblies (supercomplex SCI(1)III(2)IV(1) and megacomplex MCI(2)III(2)IV(2)). Found in a complex with TMEM177, COA6, COX18, COX20, SCO1 and SCO2. Interacts with TMEM177 in a COX20-dependent manner. Interacts with COX20. Interacts with COX16. Cu cation serves as cofactor.

Its subcellular location is the mitochondrion inner membrane. It carries out the reaction 4 Fe(II)-[cytochrome c] + O2 + 8 H(+)(in) = 4 Fe(III)-[cytochrome c] + 2 H2O + 4 H(+)(out). Component of the cytochrome c oxidase, the last enzyme in the mitochondrial electron transport chain which drives oxidative phosphorylation. The respiratory chain contains 3 multisubunit complexes succinate dehydrogenase (complex II, CII), ubiquinol-cytochrome c oxidoreductase (cytochrome b-c1 complex, complex III, CIII) and cytochrome c oxidase (complex IV, CIV), that cooperate to transfer electrons derived from NADH and succinate to molecular oxygen, creating an electrochemical gradient over the inner membrane that drives transmembrane transport and the ATP synthase. Cytochrome c oxidase is the component of the respiratory chain that catalyzes the reduction of oxygen to water. Electrons originating from reduced cytochrome c in the intermembrane space (IMS) are transferred via the dinuclear copper A center (CU(A)) of subunit 2 and heme A of subunit 1 to the active site in subunit 1, a binuclear center (BNC) formed by heme A3 and copper B (CU(B)). The BNC reduces molecular oxygen to 2 water molecules using 4 electrons from cytochrome c in the IMS and 4 protons from the mitochondrial matrix. This chain is Cytochrome c oxidase subunit 2 (MT-CO2), found in Cercocebus galeritus (Tana river mangabey).